Consider the following 157-residue polypeptide: Lectin (157 aa).

A disulfide bond links C37 and C54.

As to quaternary structure, homodimer. In terms of tissue distribution, detected in fruits (at protein level).

The protein localises to the secreted. In terms of biological role, binds with high affinity specifically to chito-oligosaccharides. May play a role in plant defense against pathogens by directly binding with the chitin cell wall. Forms filamentous structures at higher concentrations and may promote wound healing by forming filaments with phloem proteins like PP1. This chain is Lectin, found in Coccinia grandis (Ivy gourd).